A 374-amino-acid polypeptide reads, in one-letter code: Large ribosomal subunit protein uL4 (374 aa).

A disordered region spans residues 336-355 (EKAMAKGMQNKKNREARHAA).

It belongs to the universal ribosomal protein uL4 family.

This Trypanosoma brucei brucei protein is Large ribosomal subunit protein uL4 (RPL4).